An 822-amino-acid chain; its full sequence is MKPALLPWALLLLATALGPGPGPTADAQESCSMRCGALDGPCSCHPTCSGLGTCCLDFRDFCLEILPYSGSMMGGKDFVVRHFKMSSPTDASVICRFKDSIQTLGHVDSSGQVHCVSPLLYESGRIPFTVSLDNGHSFPRAGTWLAVHPNKVSMMEKSELVNETRWQYYGTANTSGNLSLTWHVKSLPTQTITIELWGYEETGMPYSQEWTAKWSYLYPLATHIPNSGSFTFTPKPAPPSYQRWRVGALRIIDSKNYAGQKDVQALWTNDHALAWHLSDDFREDPVAWARTQCQAWEELEDQLPNFLEELPDCPCTLTQARADSGRFFTDYGCDMEQGSVCTYHPGAVHCVRSVQASLRYGSGQQCCYTADGTQLLTADSSGGSTPDRGHDWGAPPFRTPPRVPSMSHWLYDVLSFYYCCLWAPDCPRYMQRRPSNDCRNYRPPRLASAFGDPHFVTFDGTNFTFNGRGEYVLLEAALTDLRVQARAQPGTMSNGTETRGTGLTAVAVQEGNSDVVEVRLANRTGGLEVLLNQEVLSFTEQSWMDLKGMFLSVAAGDRVSIMLASGAGLEVSVQGPFLSVSVLLPEKFLTHTHGLLGTLNNDPTDDFTLHSGRVLPPGTSPQELFLFGANWTVHNASSLLTYDSWFLVHNFLYQPKHDPTFEPLFPSETTLNPSLAQEAAKLCGDDHFCNFDVAATGSLSTGTATRVAHQLHQRRMQSLQPVVSCGWLAPPPNGQKEGNRYLAGSTIYFHCDNGYSLAGAETSTCQADGTWSSPTPKCQPGRSYAVLLGIIFGGLAVVAAVALVYVLLRRRKGNTHVWGAQP.

The signal sequence occupies residues Met1–Ala27. Positions Gln28–Leu66 constitute an SMB domain. Residues Gln28 to Ala785 are Extracellular-facing. 7 disulfide bridges follow: Cys31–Cys35, Cys31–Cys44, Cys35–Cys62, Cys42–Cys44, Cys42–Cys55, Cys48–Cys54, and Cys55–Cys62. Residues Asn162 and Asn177 are each glycosylated (N-linked (GlcNAc...) asparagine). Positions Pro285–Arg433 constitute an AMOP domain. One can recognise a VWFD domain in the interval Arg445–Leu639. A glycan (N-linked (GlcNAc...) asparagine) is linked at Asn522. In terms of domain architecture, Sushi spans Val723–Pro780. 2 cysteine pairs are disulfide-bonded: Cys725–Cys765 and Cys751–Cys778. The chain crosses the membrane as a helical span at residues Val786 to Val806. At Leu807–Pro822 the chain is on the cytoplasmic side.

Interacts with LGALS1; leads to an increased amount of LGALS1 on the cell surface. Interacts with GPR15LG; the interaction is direct. As to expression, highly expressed in breast cancer, but shows a restricted expression pattern in normal tissues such as adipose, adrenal gland, kidney, lung, mammary gland, placenta, thyroid, trachea, and uterus. Also expressed in colon; down-regulated in colon cancer tissues.

Its subcellular location is the cell membrane. Functionally, may be a cytokine receptor for GPR15LG. May be a tumor suppressor; together with GPR15LG has a growth inhibitory effect on colon cancer cells which includes G1 cell cycle arrest. May play a role in breast tumorigenesis. The chain is Sushi domain-containing protein 2 (SUSD2) from Homo sapiens (Human).